The following is a 342-amino-acid chain: MCQVCGAAEADLHFGGISCRACAAFFRRFFLSKKQSKKCTCKTRILDSHPCRSCRILKCFEAGMTSKKIQSGRDKTSTKAISCISTESTSNSLSARIIPRSSLNIHGAVHLWQEFENTRACKKGTKRNALIVSTSSAGDMDSTWKMVINLFSSLGELEIKDKTALLRNFMPKFIQIDSVPYFAANIDVFKNIGRDEYESSIIDFYDGVLPETNTISKKDTIRIFEPYWNFYTNKVILPIALMKLEGPEFMALVWLLFFDNGYTNLSDKCREACRNIKKVILRELRSYQIDRNFDRNRFFEILEALQLVERGEKKFMEEMVICELLNIKIDPGFMEIIRESKL.

Positions M1–S71 form a DNA-binding region, nuclear receptor. An NR C4-type zinc finger spans residues C2–C22. The NR C4-type; degenerate zinc finger occupies C39–C54. One can recognise an NR LBD domain in the interval S94 to K341.

It belongs to the nuclear hormone receptor family.

The protein localises to the nucleus. Orphan nuclear receptor. The protein is Nuclear hormone receptor family member nhr-150 (nhr-150) of Caenorhabditis elegans.